A 673-amino-acid chain; its full sequence is Annexin A6 (673 aa).

N-acetylalanine is present on Ala2. Residue Ser13 is modified to Phosphoserine. Annexin repeat units lie at residues 20–91 (FDAN…NLMR), 92–163 (PLAY…VLLQ), 175–247 (DLVQ…AVVK), 251–322 (STPE…KLCG), 363–434 (FNPD…GLMM), 435–506 (PPAH…SLAT), 521–595 (EDAQ…AIVQ), and 599–670 (NKPL…ALCG). The residue at position 30 (Tyr30) is a Phosphotyrosine. 4 positions are modified to N6-acetyllysine: Lys63, Lys68, Lys75, and Lys81. At Tyr201 the chain carries Phosphotyrosine. N6-acetyllysine is present on residues Lys306, Lys370, and Lys418. Ser422 carries the phosphoserine modification. Lys483 carries the N6-acetyllysine modification. Ser537 carries the post-translational modification Phosphoserine. Lys620 is modified (N6-acetyllysine).

Belongs to the annexin family.

The protein localises to the cytoplasm. The protein resides in the melanosome. Its function is as follows. May associate with CD21. May regulate the release of Ca(2+) from intracellular stores. The protein is Annexin A6 (Anxa6) of Rattus norvegicus (Rat).